We begin with the raw amino-acid sequence, 427 residues long: Dorsalin-1 (427 aa).

The N-terminal stretch at 1–20 (MHYFGVLAALSVFNIIACLT) is a signal peptide. Positions 21 to 318 (RGKPLENWKK…PRQHSSRSKR (298 aa)) are excised as a propeptide. N-linked (GlcNAc...) asparagine glycosylation is found at asparagine 71, asparagine 136, asparagine 265, and asparagine 292. A disordered region spans residues 288–321 (KLGKNDSSSEEEQREEKAIARPRQHSSRSKRSIG). Residues 307 to 321 (ARPRQHSSRSKRSIG) show a composition bias toward basic residues. Intrachain disulfides connect cysteine 325/cysteine 391, cysteine 354/cysteine 424, and cysteine 358/cysteine 426.

The protein belongs to the TGF-beta family. Homodimer; disulfide-linked. In terms of tissue distribution, expressed selectively in the dorsal neural tube. Lower levels seen in kidney and myotomal cells.

The protein resides in the secreted. Appears to regulate cell differentiation within the neural tube. May regulate the differentiation of cell types along the dorsoventral axis of the neural tube, acting in conjunction with distinct ventralizing signals from the notochord and floor plate. Controls the cell differentiation in the neural tube in several ways: (1) promotes the differentiation of cell types that derive from the dorsal neural tube. (2) ensures that the dorsal neural tube is refractory to ventralizing species from the notochord. (3) can diffuse and influence the fate of cells in more ventral regions of the neural tube. The polypeptide is Dorsalin-1 (DSL1) (Gallus gallus (Chicken)).